The chain runs to 446 residues: tRNA-2-methylthio-N(6)-dimethylallyladenosine synthase (446 aa).

The region spanning 3–124 (KKLYIKTYGC…LPELISKVVR (122 aa)) is the MTTase N-terminal domain. The [4Fe-4S] cluster site is built by C12, C48, C87, C162, C166, and C169. A Radical SAM core domain is found at 148 to 380 (YPQGASAFIS…QKELSSQQLA (233 aa)). Residues 383–446 (ESCVGSTMKV…SNSLTGEIYT (64 aa)) form the TRAM domain.

Belongs to the methylthiotransferase family. MiaB subfamily. In terms of assembly, monomer. [4Fe-4S] cluster serves as cofactor.

The protein resides in the cytoplasm. The catalysed reaction is N(6)-dimethylallyladenosine(37) in tRNA + (sulfur carrier)-SH + AH2 + 2 S-adenosyl-L-methionine = 2-methylsulfanyl-N(6)-dimethylallyladenosine(37) in tRNA + (sulfur carrier)-H + 5'-deoxyadenosine + L-methionine + A + S-adenosyl-L-homocysteine + 2 H(+). Its function is as follows. Catalyzes the methylthiolation of N6-(dimethylallyl)adenosine (i(6)A), leading to the formation of 2-methylthio-N6-(dimethylallyl)adenosine (ms(2)i(6)A) at position 37 in tRNAs that read codons beginning with uridine. The protein is tRNA-2-methylthio-N(6)-dimethylallyladenosine synthase of Rickettsia canadensis (strain McKiel).